Reading from the N-terminus, the 505-residue chain is uncharacterized protein (505 aa).

Positions 1 to 19 (MILFTAIILVASVVHVVVS) are cleaved as a signal peptide. Over 20–483 (SPQQCYYCVE…EQPNSAPRGE (464 aa)) the chain is Extracellular. The helical transmembrane segment at 484 to 504 (IHQLFRCTFVAVFIVFACFIV) threads the bilayer. A topological domain (cytoplasmic) is located at residue C505.

As to expression, component of the acid-insoluble and acid-soluble organic matrix of the aragonitic skeleton (at protein level).

It is found in the membrane. This is an uncharacterized protein from Acropora millepora (Staghorn coral).